The chain runs to 183 residues: Shikimate kinase (183 aa).

ATP is bound at residue 15–20 (GSGKST). Serine 19 provides a ligand contact to Mg(2+). Substrate is bound by residues aspartate 37, arginine 61, and glycine 85. An ATP-binding site is contributed by arginine 123. A substrate-binding site is contributed by arginine 142.

It belongs to the shikimate kinase family. In terms of assembly, monomer. It depends on Mg(2+) as a cofactor.

The protein localises to the cytoplasm. The catalysed reaction is shikimate + ATP = 3-phosphoshikimate + ADP + H(+). The protein operates within metabolic intermediate biosynthesis; chorismate biosynthesis; chorismate from D-erythrose 4-phosphate and phosphoenolpyruvate: step 5/7. In terms of biological role, catalyzes the specific phosphorylation of the 3-hydroxyl group of shikimic acid using ATP as a cosubstrate. In Paracidovorax citrulli (strain AAC00-1) (Acidovorax citrulli), this protein is Shikimate kinase.